The sequence spans 1044 residues: Unconventional myosin-Ic (1044 aa).

Residues 28 to 712 (GVQDFVLLEN…TLFATEDSLE (685 aa)) form the Myosin motor domain. Residues asparagine 69, tyrosine 77, 120 to 129 (SGESGAGKTE), and 173 to 177 (NDNSS) each bind ATP. N6-methyllysine is present on lysine 364. Phosphoserine is present on serine 389. N6-acetyllysine is present on lysine 467. Serine 517 bears the Phosphoserine mark. The interval 589 to 611 (LLQLVEILRSKEPAYIRCIKPND) is actin-binding. IQ domains lie at 715-744 (RQSL…SAIC) and 738-767 (VKRS…AAQT). A phosphoserine mark is found at serine 845 and serine 1022. The TH1 domain occupies 866–1040 (KDNYPQSVPR…NGHLAVVAPR (175 aa)).

It belongs to the TRAFAC class myosin-kinesin ATPase superfamily. Myosin family. Interacts (via its IQ motifs) with CABP1 and CIB1; the interaction with CABP1 and CIB1 is calcium-dependent. Interacts (via tail domain) with PLEKHB1 (via PH domain); the interaction is not affected by the presence or absence of calcium and CALM. Interacts with POLR1A. Interacts with POLR2A. Component of the B-WICH complex, at least composed of SMARCA5/SNF2H, BAZ1B/WSTF, SF3B1, DEK, MYO1C, ERCC6, MYBBP1A and DDX21. Interacts (via its IQ motifs) with CALM; this precludes interaction with YWHAB. Interacts with YWHAB; this precludes interaction with CALM. Interacts with RPS6. Interacts with actin. Interacts with LLPH. Interacts with GLUT4. Interacts (via its IQ motifs) with SH3BGRL3; the interaction is dependent on calcium and takes place at membrane ruffles.

Its subcellular location is the cytoplasm. It is found in the nucleus. It localises to the cell cortex. The protein resides in the cell projection. The protein localises to the stereocilium membrane. Its subcellular location is the cytoplasmic vesicle. It is found in the ruffle membrane. Functionally, myosins are actin-based motor molecules with ATPase activity. Unconventional myosins serve in intracellular movements. Their highly divergent tails are presumed to bind to membranous compartments, which would be moved relative to actin filaments. Involved in glucose transporter recycling in response to insulin by regulating movement of intracellular GLUT4-containing vesicles to the plasma membrane. Component of the hair cell's (the sensory cells of the inner ear) adaptation-motor complex. Acts as a mediator of adaptation of mechanoelectrical transduction in stereocilia of vestibular hair cells. Binds phosphoinositides and links the actin cytoskeleton to cellular membranes. The protein is Unconventional myosin-Ic (Myo1c) of Rattus norvegicus (Rat).